The following is a 353-amino-acid chain: S-adenosylmethionine:tRNA ribosyltransferase-isomerase (353 aa).

Belongs to the QueA family. As to quaternary structure, monomer.

The protein resides in the cytoplasm. It carries out the reaction 7-aminomethyl-7-carbaguanosine(34) in tRNA + S-adenosyl-L-methionine = epoxyqueuosine(34) in tRNA + adenine + L-methionine + 2 H(+). Its pathway is tRNA modification; tRNA-queuosine biosynthesis. In terms of biological role, transfers and isomerizes the ribose moiety from AdoMet to the 7-aminomethyl group of 7-deazaguanine (preQ1-tRNA) to give epoxyqueuosine (oQ-tRNA). The sequence is that of S-adenosylmethionine:tRNA ribosyltransferase-isomerase from Baumannia cicadellinicola subsp. Homalodisca coagulata.